A 382-amino-acid polypeptide reads, in one-letter code: tRNA-queuosine alpha-mannosyltransferase (382 aa).

It belongs to the glycosyltransferase group 1 family. Glycosyltransferase 4 subfamily.

It localises to the cytoplasm. The protein localises to the nucleus. It catalyses the reaction queuosine(34) in tRNA(Asp) + GDP-alpha-D-mannose = O-4''-alpha-D-mannosylqueuosine(34) in tRNA(Asp) + GDP + H(+). Functionally, glycosyltransferase that specifically catalyzes mannosylation of cytoplasmic tRNA(Asp) modified with queuosine at position 34 (queuosine(34)). Mannosylates the cyclopentene moiety of queuosine(34) in tRNA(Asp) to form mannosyl-queuosine(34). Mannosylation of queuosine(34) in tRNA(Asp) is required to slow-down elongation at cognate codons, GAC and GAU, thereby regulating protein translation. The protein is tRNA-queuosine alpha-mannosyltransferase (GTDC1) of Gallus gallus (Chicken).